Consider the following 1300-residue polypeptide: Histone-lysine N-methyltransferase Suv4-20 (1300 aa).

Residues 1–136 (MVVGSNHTRR…GSGSVVSGLN (136 aa)) are disordered. Over residues 14 to 62 (GSRFTNSSSSSSTSGGPTASASSTTSVTSSLATNSTSTSTAAALLSSMS) the composition is skewed to low complexity. Positions 79–97 (QTNQQHHQVAHSQPHATHY) are enriched in polar residues. Gly residues predominate over residues 116-128 (GSGGGSAGSGSGS). The SET domain occupies 255 to 366 (EACYRYTLEE…VGEEITCFYG (112 aa)). Disordered stretches follow at residues 432–490 (SRAN…GKEA), 535–574 (QQHH…QQMA), 669–744 (HQSQ…SAGR), 756–856 (NNNI…TQGI), and 891–927 (ALGG…VEPL). Positions 435–451 (NSTNSTSNSNSNTNDST) are enriched in low complexity. Over residues 452-462 (GPSETSSTNGL) the composition is skewed to polar residues. Over residues 536 to 557 (QHHHQHHFHHHHHHHHHHHNHG) the composition is skewed to basic residues. Over residues 564-574 (AEATAAVQQMA) the composition is skewed to low complexity. Composition is skewed to basic and acidic residues over residues 677 to 688 (RRSERQKEKLTD), 698 to 707 (QQKKEQKQQD), and 722 to 735 (QPEK…EQQK). Over residues 756–821 (NNNIATTTNS…SSIPSSTSSE (66 aa)) the composition is skewed to low complexity. Composition is skewed to polar residues over residues 822 to 834 (NQQQ…SCSP) and 911 to 923 (EPTT…TISN). A phosphoserine mark is found at Ser831 and Ser833. A Phosphothreonine modification is found at Thr930. 4 disordered regions span residues 956 to 988 (SLSN…NLTG), 1006 to 1188 (EHGN…PNGK), 1212 to 1233 (SPGQ…GGSG), and 1263 to 1300 (QISQ…HGQK). Residues 1009 to 1029 (NDDDEDEEEDDEEPAAEEEEE) are compositionally biased toward acidic residues. Residues 1041 to 1055 (KKQRKKQRSRSRSSQ) are compositionally biased toward basic residues. Low complexity-rich tracts occupy residues 1117–1145 (ASST…STSA) and 1161–1178 (SPSS…TSTT). Positions 1289 to 1300 (SHHHTNNHHGQK) are enriched in basic residues.

Belongs to the class V-like SAM-binding methyltransferase superfamily. Histone-lysine methyltransferase family. Suvar4-20 subfamily.

It localises to the nucleus. The protein localises to the chromosome. It carries out the reaction L-lysyl(20)-[histone H4] + S-adenosyl-L-methionine = N(6)-methyl-L-lysyl(20)-[histone H4] + S-adenosyl-L-homocysteine + H(+). The catalysed reaction is N(6)-methyl-L-lysyl(20)-[histone H4] + S-adenosyl-L-methionine = N(6),N(6)-dimethyl-L-lysyl(20)-[histone H4] + S-adenosyl-L-homocysteine + H(+). It catalyses the reaction N(6),N(6)-dimethyl-L-lysyl(20)-[histone H4] + S-adenosyl-L-methionine = N(6),N(6),N(6)-trimethyl-L-lysyl(20)-[histone H4] + S-adenosyl-L-homocysteine + H(+). Histone methyltransferase that specifically trimethylates 'Lys-20' of histone H4. H4 'Lys-20' trimethylation represents a specific tag for epigenetic transcriptional repression. Mainly functions in pericentric heterochromatin regions, thereby playing a central role in the establishment of constitutive heterochromatin in these regions. Acts as a dominant suppressor of position-effect variegation. The polypeptide is Histone-lysine N-methyltransferase Suv4-20 (Hmt4-20) (Drosophila melanogaster (Fruit fly)).